A 189-amino-acid chain; its full sequence is Early E3 20.5 kDa glycoprotein (189 aa).

2 N-linked (GlcNAc...) asparagine; by host glycosylation sites follow: Asn-73 and Asn-137.

Belongs to the adenoviridae E3_20 family.

E3 proteins seem to be dispensable for virus growth in tissue culture cells. They are potentially important for virus growth under special conditions; E3 region may help adenoviruses to evade the immune surveillance of the host. In Homo sapiens (Human), this protein is Early E3 20.5 kDa glycoprotein.